The primary structure comprises 288 residues: Hyaluronidase (288 aa).

An N-linked (GlcNAc...) asparagine glycan is attached at asparagine 36. Glutamate 66 acts as the Proton donor in catalysis. Cysteine 142 and cysteine 154 are joined by a disulfide. Asparagine 282 carries an N-linked (GlcNAc...) asparagine glycan.

This sequence belongs to the glycosyl hydrolase 56 family. As to expression, expressed by the venom gland.

Its subcellular location is the secreted. It catalyses the reaction Random hydrolysis of (1-&gt;4)-linkages between N-acetyl-beta-D-glucosamine and D-glucuronate residues in hyaluronate.. Hydrolyzes high molecular weight hyaluronic acid to produce small oligosaccharides. This Polybia paulista (Neotropical social wasp) protein is Hyaluronidase.